The sequence spans 690 residues: Eukaryotic translation initiation factor 3 subunit B (690 aa).

Over residues 1 to 11 (MAKKKSEDHSG) the composition is skewed to basic and acidic residues. Residues 1 to 33 (MAKKKSEDHSGADANDSDYNEEPNFDDPPNFVD) form a disordered region. Residues 15 to 25 (NDSDYNEEPNF) show a composition bias toward acidic residues. Residues 57-141 (SVVVVDNMPK…YTFAVNLFTD (85 aa)) enclose the RRM domain. 5 WD repeats span residues 207–246 (TRER…KIQK), 292–331 (GDGM…LLDL), 334–369 (IKIP…TLMK), 442–484 (EIRE…KPSL), and 530–575 (PDHF…IKRT). The stretch at 613-646 (EQKDRLRLTRASKELLEKRAQLRETFMEYRNKRI) forms a coiled coil.

It belongs to the eIF-3 subunit B family. Component of the eukaryotic translation initiation factor 3 (eIF-3) complex. The eIF-3 complex interacts with pix. Interacts with mxt.

It is found in the cytoplasm. Functionally, RNA-binding component of the eukaryotic translation initiation factor 3 (eIF-3) complex, which is involved in protein synthesis of a specialized repertoire of mRNAs and, together with other initiation factors, stimulates binding of mRNA and methionyl-tRNAi to the 40S ribosome. The eIF-3 complex specifically targets and initiates translation of a subset of mRNAs involved in cell proliferation. The polypeptide is Eukaryotic translation initiation factor 3 subunit B (Drosophila grimshawi (Hawaiian fruit fly)).